A 370-amino-acid polypeptide reads, in one-letter code: 3,7-dimethylxanthine N-methyltransferase CkTbS (370 aa).

Tyr-24 provides a ligand contact to S-adenosyl-L-homocysteine. Thr-31 is a binding site for theobromine. S-adenosyl-L-homocysteine contacts are provided by Cys-67, Asn-72, Asp-104, Leu-105, Ser-139, and Phe-140. The theobromine site is built by Tyr-157, His-160, and Trp-161. Asn-178 contacts Mg(2+). His-226 is a theobromine binding site. Residues Asp-264, Phe-266, and Asn-267 each contribute to the Mg(2+) site. Residue Phe-322 participates in theobromine binding.

The protein belongs to the methyltransferase superfamily. Type-7 methyltransferase family. Requires Mg(2+) as cofactor.

The catalysed reaction is 7-methylxanthine + S-adenosyl-L-methionine = theobromine + S-adenosyl-L-homocysteine + H(+). The protein operates within alkaloid biosynthesis. Involved in the biosynthesis of caffeine in cv. Puer. Involved in the biosynthesis of theacrine in cv. Kucha, a caffeine-like xanthine alkaloid with diverse beneficial biological activities including anti-depressive, sedative, and hypnotic activities, improving learning and memory, increasing exercise activity, and preventing nonalcoholic fatty liver disease. Catalyzes the conversion of 7-methylxanthine (7mX) to theobromine but not able to convert paraxanthine to caffeine. This is 3,7-dimethylxanthine N-methyltransferase CkTbS from Camellia sinensis var. assamica (Assam tea).